A 311-amino-acid polypeptide reads, in one-letter code: MYPAPDMSLWQGRIDSQEGADARRWHQWMRPYADDAEAASVLLGFASDEGVRRNQGRQGARHGPPALRRALANLAWHGEQAIYDAGDIVAGDDLEAAQECYAQRVADLLACGHRVVGLGGGHEIAYASFAGLARHLSRHERLPRIGILNFDAHFDLRHAERASSGTPFRQIAELCQASDWPFAYCCLGISRLSNTAALFDQAQRLGVRYLLDRQLQPWNLERSEAFLDGFLQSVDHLYLTVCLDVLPAAQAPGVSAPSAHGVEMPVVEHLVRRAKASGKLRLADIAELNPQLDSDQRTARIAARLVDSLVN.

Mn(2+)-binding residues include His-122, Asp-151, His-153, Asp-155, Cys-242, and Asp-244.

It belongs to the arginase family. Homodimer. Mn(2+) is required as a cofactor.

It catalyses the reaction N-formimidoyl-L-glutamate + H2O = formamide + L-glutamate. It participates in amino-acid degradation; L-histidine degradation into L-glutamate; L-glutamate from N-formimidoyl-L-glutamate (hydrolase route): step 1/1. Catalyzes the conversion of N-formimidoyl-L-glutamate to L-glutamate and formamide. This is Formimidoylglutamase from Pseudomonas aeruginosa (strain ATCC 15692 / DSM 22644 / CIP 104116 / JCM 14847 / LMG 12228 / 1C / PRS 101 / PAO1).